Consider the following 88-residue polypeptide: Small ribosomal subunit protein bS20 (88 aa).

Residues 1-28 (MANIKSQIKRNRQNEKRRLRNKSVKSSL) form a disordered region. The span at 7-23 (QIKRNRQNEKRRLRNKS) shows a compositional bias: basic residues.

This sequence belongs to the bacterial ribosomal protein bS20 family.

Functionally, binds directly to 16S ribosomal RNA. In Salinispora tropica (strain ATCC BAA-916 / DSM 44818 / JCM 13857 / NBRC 105044 / CNB-440), this protein is Small ribosomal subunit protein bS20.